Reading from the N-terminus, the 182-residue chain is Large ribosomal subunit protein bL25 (182 aa).

The protein belongs to the bacterial ribosomal protein bL25 family. CTC subfamily. Part of the 50S ribosomal subunit; part of the 5S rRNA/L5/L18/L25 subcomplex. Contacts the 5S rRNA. Binds to the 5S rRNA independently of L5 and L18.

Its function is as follows. This is one of the proteins that binds to the 5S RNA in the ribosome where it forms part of the central protuberance. The chain is Large ribosomal subunit protein bL25 from Borrelia garinii subsp. bavariensis (strain ATCC BAA-2496 / DSM 23469 / PBi) (Borreliella bavariensis).